The sequence spans 354 residues: L-lactate dehydrogenase (354 aa).

NAD(+) is bound by residues 73-78 (DAVPDK) and arginine 120. Substrate-binding residues include arginine 127, asparagine 159, and arginine 190. NAD(+) is bound at residue asparagine 159. The active-site Proton acceptor is the histidine 214. Threonine 269 serves as a coordination point for substrate. A disordered region spans residues 302-332 (HGIPDGTTSSSACPPRRPRRRPGRREMELTE).

This sequence belongs to the LDH/MDH superfamily. LDH family. As to quaternary structure, homotetramer.

It catalyses the reaction (S)-lactate + NAD(+) = pyruvate + NADH + H(+). Its pathway is fermentation; pyruvate fermentation to lactate; (S)-lactate from pyruvate: step 1/1. The chain is L-lactate dehydrogenase from Zea mays (Maize).